The primary structure comprises 383 residues: MARDLYETLNVSRDASKEDIKRAYRKLARQYHPDVNKDAGAEDTFKELSRAYEVLSDDDQRARYDRFGEAGLNGGVGGGPGDFAGAAGFGDISDIFESFFGGFAGAGTGGRRATRPGGPTRGDDLRYDMVLEFQEAIFGGEKEITINHLITCETCRGSGSKPGSGPMTCRNCGGQGQIRQARRTPFGLFTQVAACPNCQGTGEVIESPCPTCSGRGRNQKQTTIKITIPAGVDAGSRLRVQGEGDAGMRGGPPGDLFIYVSVRNHPVFRREGQDIYSIAEISYLQAILGSQMSVETVDGPQTVVVPPGTQPETVLTLDGKGVPRIGNPTRRGNHYLQLKVVIPTKLGAEERELLTKLAKARGEKVSKKEGLEGLIDSIGNLFH.

Residues 4-68 form the J domain; the sequence is DLYETLNVSR…DQRARYDRFG (65 aa). The CR-type zinc finger occupies 139–221; it reads GGEKEITINH…CSGRGRNQKQ (83 aa). Zn(2+)-binding residues include Cys-152, Cys-155, Cys-169, Cys-172, Cys-195, Cys-198, Cys-209, and Cys-212. CXXCXGXG motif repeat units lie at residues 152–159, 169–176, 195–202, and 209–216; these read CETCRGSG, CRNCGGQG, CPNCQGTG, and CPTCSGRG.

This sequence belongs to the DnaJ family. Homodimer. Zn(2+) is required as a cofactor.

Its subcellular location is the cytoplasm. Functionally, participates actively in the response to hyperosmotic and heat shock by preventing the aggregation of stress-denatured proteins and by disaggregating proteins, also in an autonomous, DnaK-independent fashion. Unfolded proteins bind initially to DnaJ; upon interaction with the DnaJ-bound protein, DnaK hydrolyzes its bound ATP, resulting in the formation of a stable complex. GrpE releases ADP from DnaK; ATP binding to DnaK triggers the release of the substrate protein, thus completing the reaction cycle. Several rounds of ATP-dependent interactions between DnaJ, DnaK and GrpE are required for fully efficient folding. Also involved, together with DnaK and GrpE, in the DNA replication of plasmids through activation of initiation proteins. In Gloeobacter violaceus (strain ATCC 29082 / PCC 7421), this protein is Chaperone protein DnaJ.